Here is a 483-residue protein sequence, read N- to C-terminus: Aspartyl/glutamyl-tRNA(Asn/Gln) amidotransferase subunit B (483 aa).

This sequence belongs to the GatB/GatE family. GatB subfamily. As to quaternary structure, heterotrimer of A, B and C subunits.

The catalysed reaction is L-glutamyl-tRNA(Gln) + L-glutamine + ATP + H2O = L-glutaminyl-tRNA(Gln) + L-glutamate + ADP + phosphate + H(+). The enzyme catalyses L-aspartyl-tRNA(Asn) + L-glutamine + ATP + H2O = L-asparaginyl-tRNA(Asn) + L-glutamate + ADP + phosphate + 2 H(+). Allows the formation of correctly charged Asn-tRNA(Asn) or Gln-tRNA(Gln) through the transamidation of misacylated Asp-tRNA(Asn) or Glu-tRNA(Gln) in organisms which lack either or both of asparaginyl-tRNA or glutaminyl-tRNA synthetases. The reaction takes place in the presence of glutamine and ATP through an activated phospho-Asp-tRNA(Asn) or phospho-Glu-tRNA(Gln). The sequence is that of Aspartyl/glutamyl-tRNA(Asn/Gln) amidotransferase subunit B from Anaeromyxobacter sp. (strain Fw109-5).